The chain runs to 874 residues: Alanine--tRNA ligase (874 aa).

Zn(2+) contacts are provided by His-562, His-566, Cys-664, and His-668.

This sequence belongs to the class-II aminoacyl-tRNA synthetase family. The cofactor is Zn(2+).

The protein localises to the cytoplasm. The catalysed reaction is tRNA(Ala) + L-alanine + ATP = L-alanyl-tRNA(Ala) + AMP + diphosphate. Its function is as follows. Catalyzes the attachment of alanine to tRNA(Ala) in a two-step reaction: alanine is first activated by ATP to form Ala-AMP and then transferred to the acceptor end of tRNA(Ala). Also edits incorrectly charged Ser-tRNA(Ala) and Gly-tRNA(Ala) via its editing domain. The protein is Alanine--tRNA ligase of Neisseria meningitidis serogroup C (strain 053442).